The primary structure comprises 524 residues: Anthranilate synthase component 1 (524 aa).

The segment covering 1–16 has biased composition (polar residues); the sequence is MQTTANHSSRSTQTGT. Positions 1 to 25 are disordered; sequence MQTTANHSSRSTQTGTRAHGAALAE. L-tryptophan is bound by residues Ser-74 and 298–300; that span reads PYM. 339–340 contacts chorismate; the sequence is GT. Lys-355 participates in a covalent cross-link: Isoglutamyl lysine isopeptide (Lys-Gln) (interchain with Q-Cter in protein Pup). Mg(2+) is bound at residue Glu-366. Residues Tyr-454, Arg-474, 488–490, and Gly-490 contribute to the chorismate site; that span reads GGG. Glu-503 is a binding site for Mg(2+).

It belongs to the anthranilate synthase component I family. Heterotetramer consisting of two non-identical subunits: a beta subunit (TrpG) and a large alpha subunit (TrpE). The cofactor is Mg(2+).

The catalysed reaction is chorismate + L-glutamine = anthranilate + pyruvate + L-glutamate + H(+). The protein operates within amino-acid biosynthesis; L-tryptophan biosynthesis; L-tryptophan from chorismate: step 1/5. Its activity is regulated as follows. Feedback inhibited by tryptophan. Its function is as follows. Part of a heterotetrameric complex that catalyzes the two-step biosynthesis of anthranilate, an intermediate in the biosynthesis of L-tryptophan. In the first step, the glutamine-binding beta subunit (TrpG) of anthranilate synthase (AS) provides the glutamine amidotransferase activity which generates ammonia as a substrate that, along with chorismate, is used in the second step, catalyzed by the large alpha subunit of AS (TrpE) to produce anthranilate. In the absence of TrpG, TrpE can synthesize anthranilate directly from chorismate and high concentrations of ammonia. This is Anthranilate synthase component 1 (trpE) from Mycolicibacterium smegmatis (strain ATCC 700084 / mc(2)155) (Mycobacterium smegmatis).